A 415-amino-acid polypeptide reads, in one-letter code: Histidine--tRNA ligase (415 aa).

This sequence belongs to the class-II aminoacyl-tRNA synthetase family. Homodimer.

Its subcellular location is the cytoplasm. It catalyses the reaction tRNA(His) + L-histidine + ATP = L-histidyl-tRNA(His) + AMP + diphosphate + H(+). This is Histidine--tRNA ligase from Clostridium perfringens (strain ATCC 13124 / DSM 756 / JCM 1290 / NCIMB 6125 / NCTC 8237 / Type A).